The chain runs to 505 residues: Lysine--tRNA ligase (505 aa).

Mg(2+) contacts are provided by E415 and E422.

Belongs to the class-II aminoacyl-tRNA synthetase family. In terms of assembly, homodimer. Mg(2+) serves as cofactor.

It is found in the cytoplasm. It carries out the reaction tRNA(Lys) + L-lysine + ATP = L-lysyl-tRNA(Lys) + AMP + diphosphate. The chain is Lysine--tRNA ligase from Cronobacter sakazakii (strain ATCC BAA-894) (Enterobacter sakazakii).